The primary structure comprises 188 residues: Elongation factor P (188 aa).

It belongs to the elongation factor P family.

The protein localises to the cytoplasm. The protein operates within protein biosynthesis; polypeptide chain elongation. Involved in peptide bond synthesis. Stimulates efficient translation and peptide-bond synthesis on native or reconstituted 70S ribosomes in vitro. Probably functions indirectly by altering the affinity of the ribosome for aminoacyl-tRNA, thus increasing their reactivity as acceptors for peptidyl transferase. The protein is Elongation factor P of Anaplasma phagocytophilum (strain HZ).